A 289-amino-acid chain; its full sequence is uncharacterized protein (289 aa).

Over residues M1 to P20 the composition is skewed to basic and acidic residues. Residues M1–G39 are disordered. I49 to S73 serves as a coordination point for NADP(+). S181 provides a ligand contact to substrate. Y194 acts as the Proton acceptor in catalysis.

Belongs to the short-chain dehydrogenases/reductases (SDR) family.

This is an uncharacterized protein from Bacillus subtilis (strain 168).